The chain runs to 214 residues: External core antigen (214 aa).

An N-terminal signal peptide occupies residues 1 to 19 (MQLFHLCLIISCTCPTVQA). The segment at 25–27 (GWL) is HBEAG. The tract at residues 165–214 (NAPILSTLPETTVVRRRDRGRSPRRRTPSPRRRRSQSPRRRRSQSRESQC) is disordered. A compositionally biased stretch (basic residues) spans 178–207 (VRRRDRGRSPRRRTPSPRRRRSQSPRRRRS). A 1; half-length repeat occupies 186–192 (SPRRRTP). Residues 186-208 (SPRRRTPSPRRRRSQSPRRRRSQ) are 3 X 8 AA repeats of S-P-R-R-R-R-S-Q. Residues 186–214 (SPRRRTPSPRRRRSQSPRRRRSQSRESQC) constitute a propeptide that is removed on maturation. Repeat copies occupy residues 193 to 200 (SPRRRRSQ) and 201 to 208 (SPRRRRSQ).

It belongs to the orthohepadnavirus precore antigen family. As to quaternary structure, homodimerizes. In terms of processing, phosphorylated. Post-translationally, cleaved by host furin.

Its subcellular location is the secreted. The protein resides in the host nucleus. Its function is as follows. May regulate immune response to the intracellular capsid in acting as a T-cell tolerogen, by having an immunoregulatory effect which prevents destruction of infected cells by cytotoxic T-cells. This immune regulation may predispose to chronicity during perinatal infections and prevent severe liver injury during adult infections. The chain is External core antigen from Hepatitis B virus genotype A2 subtype adw2 (isolate Germany/991/1990) (HBV-A).